An 886-amino-acid chain; its full sequence is Microsomal triglyceride transfer protein (886 aa).

A signal peptide spans 1–24 (MLRLAGLLLCVTSFLSTSSLGANA). The Vitellogenin domain occupies 28–662 (LDNDRLYRYS…QSNNALLHGL (635 aa)). 2 disulfides stabilise this stretch: Cys174/Cys194 and Cys440/Cys445.

In terms of assembly, heterodimer; heterodimerizes with the protein disulfide isomerase. Interacts with apolipoprotein B.

The protein localises to the endoplasmic reticulum. Functionally, catalyzes the transport of triglyceride, cholesteryl ester, and phospholipid between phospholipid surfaces. Required for the secretion of plasma lipoproteins that contain apolipoprotein B. This is Microsomal triglyceride transfer protein from Megalobrama amblycephala (Chinese blunt snout bream).